The sequence spans 719 residues: Phenylalanine--tRNA ligase beta subunit, chloroplastic (719 aa).

Residues 318–403 (DHALNINLSI…RIYGYHKFRS (86 aa)) enclose the B5 domain. Mg(2+) is bound by residues D381, D387, E390, and E391. The region spanning 625-718 (SKYPSIIRDL…IVKQLNLKIR (94 aa)) is the FDX-ACB domain.

Belongs to the phenylalanyl-tRNA synthetase beta subunit family. Type 1 subfamily. As to quaternary structure, tetramer of two alpha and two beta subunits. It depends on Mg(2+) as a cofactor.

Its subcellular location is the plastid. The protein localises to the chloroplast. The enzyme catalyses tRNA(Phe) + L-phenylalanine + ATP = L-phenylalanyl-tRNA(Phe) + AMP + diphosphate + H(+). The sequence is that of Phenylalanine--tRNA ligase beta subunit, chloroplastic from Pyropia yezoensis (Susabi-nori).